Reading from the N-terminus, the 426-residue chain is Tyrosine-protein phosphatase non-receptor type 20 (426 aa).

Over residues Met1 to Lys10 the composition is skewed to basic residues. The interval Met1–His58 is disordered. Over residues Asn21–Ser35 the composition is skewed to low complexity. Ser76 is subject to Phosphoserine. Positions Asn95–Arg117 are enriched in polar residues. The disordered stretch occupies residues Asn95–Thr124. The residue at position 127 (Ser127) is a Phosphoserine. One can recognise a Tyrosine-protein phosphatase domain in the interval Ile165–Val418. Substrate-binding positions include Asp329, Cys359–Arg365, and Gln403. Catalysis depends on Cys359, which acts as the Phosphocysteine intermediate.

Belongs to the protein-tyrosine phosphatase family. Non-receptor class subfamily. Testis-specific. Specifically expressed in testicular germ cells that undergo meiosis (at protein level).

It is found in the nucleus. The protein localises to the cytoplasm. It localises to the cytoskeleton. The protein resides in the microtubule organizing center. Its subcellular location is the centrosome. It catalyses the reaction O-phospho-L-tyrosyl-[protein] + H2O = L-tyrosyl-[protein] + phosphate. Its function is as follows. Tyrosine-protein phosphatase targeted to sites of actin polymerization in response of varied extracellular stimuli. Has tyrosine phosphatase activity towards various tyrosyl phosphorylated substrates. The polypeptide is Tyrosine-protein phosphatase non-receptor type 20 (Ptpn20) (Mus musculus (Mouse)).